The primary structure comprises 200 residues: LexA repressor (200 aa).

A DNA-binding region (H-T-H motif) is located at residues 28–48; that stretch reads RAEIAEILGFKSANAAEEHLK. Residues Ser118 and Lys155 each act as for autocatalytic cleavage activity in the active site.

The protein belongs to the peptidase S24 family. In terms of assembly, homodimer.

The catalysed reaction is Hydrolysis of Ala-|-Gly bond in repressor LexA.. Represses a number of genes involved in the response to DNA damage (SOS response), including recA and lexA. In the presence of single-stranded DNA, RecA interacts with LexA causing an autocatalytic cleavage which disrupts the DNA-binding part of LexA, leading to derepression of the SOS regulon and eventually DNA repair. This is LexA repressor from Teredinibacter turnerae (strain ATCC 39867 / T7901).